The following is a 216-amino-acid chain: DNA-directed RNA polymerase subunit alpha (216 aa).

It belongs to the RNA polymerase alpha chain family. In terms of assembly, in plastids the minimal PEP RNA polymerase catalytic core is composed of four subunits: alpha, beta, beta', and beta''. When a (nuclear-encoded) sigma factor is associated with the core the holoenzyme is formed, which can initiate transcription.

It localises to the plastid. The protein resides in the chloroplast. The enzyme catalyses RNA(n) + a ribonucleoside 5'-triphosphate = RNA(n+1) + diphosphate. DNA-dependent RNA polymerase catalyzes the transcription of DNA into RNA using the four ribonucleoside triphosphates as substrates. The chain is DNA-directed RNA polymerase subunit alpha (rpoA) from Euglena granulata.